Here is a 344-residue protein sequence, read N- to C-terminus: Heat-inducible transcription repressor HrcA (344 aa).

This sequence belongs to the HrcA family.

In terms of biological role, negative regulator of class I heat shock genes (grpE-dnaK-dnaJ and groELS operons). Prevents heat-shock induction of these operons. This Aster yellows witches'-broom phytoplasma (strain AYWB) protein is Heat-inducible transcription repressor HrcA.